We begin with the raw amino-acid sequence, 160 residues long: MSDPGFLAAPVLLLLLVSLASASLEQAASRDDDSAERPLSKRHSEGTFTSDYSKYLENKQAKDFVRWLMNAKRGGSELQRRHADGTFTNDMTSYLDAKAARDFVSWLARSDKSRRDGGDHLAENSEDKRHAEDVNALLDRTMAKTFIEWLEKQNSNDQTD.

The N-terminal stretch at 1 to 22 (MSDPGFLAAPVLLLLLVSLASA) is a signal peptide. Propeptides lie at residues 23–40 (SLEQAASRDDDSAERPLS), 74–79 (GGSELQ), and 116–127 (DGGDHLAENSED). The segment at 112–132 (KSRRDGGDHLAENSEDKRHAE) is disordered.

Belongs to the glucagon family.

The protein resides in the secreted. Promotes hydrolysis of glycogen and lipids, and raises the blood sugar level. The polypeptide is Glucagon-1 (gcg1) (Petromyzon marinus (Sea lamprey)).